Consider the following 466-residue polypeptide: Bifunctional protein GlmU (466 aa).

The interval 1-233 is pyrophosphorylase; sequence MLHKSVLGLV…ADEAMGANDR (233 aa). UDP-N-acetyl-alpha-D-glucosamine contacts are provided by residues 11 to 14, K25, Q79, and 84 to 85; these read LAAG and GT. Position 108 (D108) interacts with Mg(2+). UDP-N-acetyl-alpha-D-glucosamine-binding residues include G143, E158, N173, and N231. Residue N231 participates in Mg(2+) binding. The tract at residues 234 to 254 is linker; it reads AQLAALEAVYRQRKVQELFAQ. Positions 255-466 are N-acetyltransferase; that stretch reads GVTLIDPNRI…QKKKEHKNDA (212 aa). UDP-N-acetyl-alpha-D-glucosamine is bound by residues R337 and K355. H367 (proton acceptor) is an active-site residue. UDP-N-acetyl-alpha-D-glucosamine-binding residues include Y370 and N381. Residues A384, 390-391, S409, A427, and R444 each bind acetyl-CoA; that span reads NY.

It in the N-terminal section; belongs to the N-acetylglucosamine-1-phosphate uridyltransferase family. This sequence in the C-terminal section; belongs to the transferase hexapeptide repeat family. As to quaternary structure, homotrimer. Requires Mg(2+) as cofactor.

The protein resides in the cytoplasm. The catalysed reaction is alpha-D-glucosamine 1-phosphate + acetyl-CoA = N-acetyl-alpha-D-glucosamine 1-phosphate + CoA + H(+). The enzyme catalyses N-acetyl-alpha-D-glucosamine 1-phosphate + UTP + H(+) = UDP-N-acetyl-alpha-D-glucosamine + diphosphate. It participates in nucleotide-sugar biosynthesis; UDP-N-acetyl-alpha-D-glucosamine biosynthesis; N-acetyl-alpha-D-glucosamine 1-phosphate from alpha-D-glucosamine 6-phosphate (route II): step 2/2. It functions in the pathway nucleotide-sugar biosynthesis; UDP-N-acetyl-alpha-D-glucosamine biosynthesis; UDP-N-acetyl-alpha-D-glucosamine from N-acetyl-alpha-D-glucosamine 1-phosphate: step 1/1. The protein operates within bacterial outer membrane biogenesis; LPS lipid A biosynthesis. Catalyzes the last two sequential reactions in the de novo biosynthetic pathway for UDP-N-acetylglucosamine (UDP-GlcNAc). The C-terminal domain catalyzes the transfer of acetyl group from acetyl coenzyme A to glucosamine-1-phosphate (GlcN-1-P) to produce N-acetylglucosamine-1-phosphate (GlcNAc-1-P), which is converted into UDP-GlcNAc by the transfer of uridine 5-monophosphate (from uridine 5-triphosphate), a reaction catalyzed by the N-terminal domain. The polypeptide is Bifunctional protein GlmU (Dichelobacter nodosus (strain VCS1703A)).